Here is a 301-residue protein sequence, read N- to C-terminus: Probable 5-dehydro-4-deoxyglucarate dehydratase (301 aa).

It belongs to the DapA family.

It carries out the reaction 5-dehydro-4-deoxy-D-glucarate + H(+) = 2,5-dioxopentanoate + CO2 + H2O. Its pathway is carbohydrate acid metabolism; D-glucarate degradation; 2,5-dioxopentanoate from D-glucarate: step 2/2. This chain is Probable 5-dehydro-4-deoxyglucarate dehydratase, found in Chelativorans sp. (strain BNC1).